The following is a 199-amino-acid chain: Probable GTP-binding protein EngB (199 aa).

The 172-residue stretch at 28–199 (DLPEIALAGR…DSWDAILEQV (172 aa)) folds into the EngB-type G domain. GTP is bound by residues 36–43 (GRSNVGKS), 63–67 (GKTQL), 81–84 (DVPG), 148–151 (TKAD), and 180–182 (FSS). The Mg(2+) site is built by Ser43 and Thr65.

Belongs to the TRAFAC class TrmE-Era-EngA-EngB-Septin-like GTPase superfamily. EngB GTPase family. The cofactor is Mg(2+).

In terms of biological role, necessary for normal cell division and for the maintenance of normal septation. This Streptococcus pyogenes serotype M49 (strain NZ131) protein is Probable GTP-binding protein EngB.